A 57-amino-acid polypeptide reads, in one-letter code: UPF0391 membrane protein NE0130 (57 aa).

2 helical membrane passes run 1–21 and 33–53; these read MLKWAIIFAIISFISGVFGFR and FLFFLFALITLVLLVLGLLGI.

The protein belongs to the UPF0391 family.

It is found in the cell membrane. In Nitrosomonas europaea (strain ATCC 19718 / CIP 103999 / KCTC 2705 / NBRC 14298), this protein is UPF0391 membrane protein NE0130.